A 335-amino-acid polypeptide reads, in one-letter code: Fructose-1,6-bisphosphatase class 1 (335 aa).

Mg(2+)-binding residues include glutamate 89, aspartate 112, leucine 114, and aspartate 115. Residues 115–118 (DGSS), asparagine 208, tyrosine 241, and lysine 271 each bind substrate. Mg(2+) is bound at residue glutamate 277.

Belongs to the FBPase class 1 family. As to quaternary structure, homotetramer. Requires Mg(2+) as cofactor.

Its subcellular location is the cytoplasm. It catalyses the reaction beta-D-fructose 1,6-bisphosphate + H2O = beta-D-fructose 6-phosphate + phosphate. Its pathway is carbohydrate biosynthesis; gluconeogenesis. This is Fructose-1,6-bisphosphatase class 1 from Proteus mirabilis (strain HI4320).